The chain runs to 82 residues: DEKPKLILPTPAPPNLPQLVGGGGGNRKDGFGVSVDAHQKVWTSDNGGHSIGVSPGYSQHLPGPYGNSRPDYRIGAGYSYNF.

2 disordered regions span residues 1-32 (DEKPKLILPTPAPPNLPQLVGGGGGNRKDGFG) and 45-69 (DNGGHSIGVSPGYSQHLPGPYGNSR). A Phenylalanine amide modification is found at F82.

Belongs to the attacin/sarcotoxin-2 family.

The protein localises to the secreted. Functionally, antimicrobial peptide required to resist Gram-negative bacterial infections, regulated by Dredd. This Protophormia terraenovae (Northern blowfly) protein is Diptericin-A.